The primary structure comprises 134 residues: Aspartate 1-decarboxylase (134 aa).

The active-site Schiff-base intermediate with substrate; via pyruvic acid is the serine 25. The residue at position 25 (serine 25) is a Pyruvic acid (Ser). Residue threonine 57 participates in substrate binding. Catalysis depends on tyrosine 58, which acts as the Proton donor. A substrate-binding site is contributed by 73 to 75 (GAA).

Belongs to the PanD family. As to quaternary structure, heterooctamer of four alpha and four beta subunits. Pyruvate serves as cofactor. Post-translationally, is synthesized initially as an inactive proenzyme, which is activated by self-cleavage at a specific serine bond to produce a beta-subunit with a hydroxyl group at its C-terminus and an alpha-subunit with a pyruvoyl group at its N-terminus.

The protein localises to the cytoplasm. It catalyses the reaction L-aspartate + H(+) = beta-alanine + CO2. It functions in the pathway cofactor biosynthesis; (R)-pantothenate biosynthesis; beta-alanine from L-aspartate: step 1/1. Its function is as follows. Catalyzes the pyruvoyl-dependent decarboxylation of aspartate to produce beta-alanine. The sequence is that of Aspartate 1-decarboxylase from Sulfurihydrogenibium sp. (strain YO3AOP1).